The chain runs to 173 residues: Globin, cuticular isoform (173 aa).

Residues 1–16 (MLWFVAVCFAIASVSA) form the signal peptide. Residues 17 to 166 (MSPADVKKHT…FNSEAQHQLE (150 aa)) enclose the Globin domain. His-113 lines the heme b pocket.

It belongs to the globin family. In terms of tissue distribution, expressed only by adult nematodes in the gut.

It localises to the secreted. It is found in the extracellular space. The protein is Globin, cuticular isoform (GLBC) of Nippostrongylus brasiliensis (Rat hookworm).